The primary structure comprises 420 residues: LanC-like protein 3 (420 aa).

It belongs to the LanC-like protein family.

The protein is LanC-like protein 3 (Lancl3) of Mus musculus (Mouse).